Here is a 181-residue protein sequence, read N- to C-terminus: uncharacterized protein (181 aa).

Residues 162-181 form a disordered region; sequence QARGPAGTRTPQRRCSSHEA.

This is an uncharacterized protein from Homo sapiens (Human).